A 669-amino-acid chain; its full sequence is Galactocerebrosidase (669 aa).

The N-terminal stretch at 1-26 (MTAAAGSAGHAAVPLLLCALLVPGGA) is a signal peptide. Substrate is bound by residues threonine 93, tryptophan 135, and asparagine 181. The active-site Proton donor/acceptor is glutamate 182. Catalysis depends on glutamate 258, which acts as the Nucleophile. Cysteines 271 and 378 form a disulfide. The N-linked (GlcNAc...) asparagine glycan is linked to asparagine 363. Arginine 380 is a substrate binding site. Asparagine 387, asparagine 543, and asparagine 586 each carry an N-linked (GlcNAc...) asparagine glycan.

Belongs to the glycosyl hydrolase 59 family.

The protein resides in the lysosome. The catalysed reaction is a beta-D-galactosyl-(1&lt;-&gt;1')-N-acylsphing-4-enine + H2O = an N-acylsphing-4-enine + D-galactose. It carries out the reaction beta-D-galactosyl-(1&lt;-&gt;1)-sphing-4-enine + H2O = sphing-4-enine + D-galactose. The enzyme catalyses a D-galactosylceramide + H2O = an N-acyl-sphingoid base + D-galactose. Functionally, hydrolyzes the galactose ester bonds of glycolipids such as galactosylceramide and galactosylsphingosine. Enzyme with very low activity responsible for the lysosomal catabolism of galactosylceramide, a major lipid in myelin, kidney and epithelial cells of small intestine and colon. This is Galactocerebrosidase from Canis lupus familiaris (Dog).